Reading from the N-terminus, the 503-residue chain is Probable cytochrome P450 6a19 (503 aa).

Residue Cys445 participates in heme binding.

Belongs to the cytochrome P450 family. The cofactor is heme.

The protein resides in the endoplasmic reticulum membrane. It is found in the microsome membrane. In terms of biological role, may be involved in the metabolism of insect hormones and in the breakdown of synthetic insecticides. This chain is Probable cytochrome P450 6a19 (Cyp6a19), found in Drosophila melanogaster (Fruit fly).